Here is a 477-residue protein sequence, read N- to C-terminus: Phosphatidylinositol 4-kinase type 2-beta (477 aa).

The interval 1–80 (MPEPPRDIMA…EDRSISASLS (80 aa)) is disordered. Ser-45 bears the Phosphoserine mark. Residues 116–447 (GVFPERISQG…AQMPCVIVEC (332 aa)) enclose the PI3K/PI4K catalytic domain. The interval 122–128 (ISQGSSG) is G-loop. 2 residues coordinate ATP: Ser-129 and Lys-144. The interval 149 to 151 (EPY) is important for substrate binding. The tract at residues 157–170 (KWTKYVHKVCCPCC) is important for interaction with membranes. ATP-binding positions include 253–256 (QLFV) and 267–268 (RR). The interval 260–268 (KEAEYWLRR) is important for interaction with membranes. A catalytic loop region spans residues 297–305 (RNTDRGNDN). Positions 338-358 (AIDNGLAFPFKHPDEWRAYPF) are activation loop. Asp-340 provides a ligand contact to ATP. Residues 353-362 (WRAYPFHWAW) are important for interaction with membranes.

It belongs to the PI3/PI4-kinase family. Type II PI4K subfamily.

It localises to the cytoplasm. The protein resides in the cytosol. Its subcellular location is the golgi apparatus membrane. The protein localises to the endoplasmic reticulum membrane. It is found in the cell membrane. It localises to the early endosome membrane. It catalyses the reaction a 1,2-diacyl-sn-glycero-3-phospho-(1D-myo-inositol) + ATP = a 1,2-diacyl-sn-glycero-3-phospho-(1D-myo-inositol 4-phosphate) + ADP + H(+). Functionally, together with PI4K2A and the type III PI4Ks (PIK4CA and PIK4CB) it contributes to the overall PI4-kinase activity of the cell. This contribution may be especially significant in plasma membrane, endosomal and Golgi compartments. The phosphorylation of phosphatidylinositol (PI) to PI4P is the first committed step in the generation of phosphatidylinositol 4,5-bisphosphate (PIP2), a precursor of the second messenger inositol 1,4,5-trisphosphate (InsP3). Contributes to the production of InsP3 in stimulated cells and is likely to be involved in the regulation of vesicular trafficking. The chain is Phosphatidylinositol 4-kinase type 2-beta (Pi4k2b) from Rattus norvegicus (Rat).